The sequence spans 980 residues: Ovochymase-2 (980 aa).

The signal sequence occupies residues 1–21; sequence MAETSVFSIMMLTVMTAVGRG. A propeptide spans 22–49 (activation peptide); sequence ATDRPGRVSRCGERPSANASVTYNLLSR. N-linked (GlcNAc...) asparagine glycosylation is present at N39. One can recognise a Peptidase S1 1 domain in the interval 50–299; it reads IVGGTSAVKG…LLNWLSANLN (250 aa). A disulfide bridge connects residues C75 and C91. H90 functions as the Charge relay system in the catalytic mechanism. 2 residues coordinate Ca(2+): V112 and E117. The active-site Charge relay system is D140. 11 cysteine pairs are disulfide-bonded: C174–C244, C205–C223, C234–C263, C312–C342, C369–C388, C435–C462, C489–C510, C618–C634, C716–C779, C744–C757, and C769–C798. S238 acts as the Charge relay system in catalysis. CUB domains are found at residues 312 to 425 and 435 to 547; these read CSTN…YQAV and CGSV…ISFV. The 230-residue stretch at 593–822 folds into the Peptidase S1 2 domain; sequence IIKAEEAMPN…FIPWIMETIL (230 aa). A propeptide spans 593-980 (activation peptide); that stretch reads IIKAEEAMPN…WLSYSFHNQN (388 aa). N-linked (GlcNAc...) asparagine glycosylation is present at N766. The disordered stretch occupies residues 835-863; it reads HHPLIPPDKLSQEKALLPDSPPSNDSSSS. 2 N-linked (GlcNAc...) asparagine glycosylation sites follow: N858 and N932.

The protein belongs to the peptidase S1 family. The catalytically inactive 108 kDa form is processed both N- and C-terminally to give rise to catalytically active and inactive forms. In terms of tissue distribution, differentially expressed in the oviductal pars recta (PR) region.

The protein resides in the secreted. The enzyme catalyses Preferential cleavage at 371-Gly-Ser-Arg-|-Trp-374 of glycoprotein gp43 in Xenopus laevis coelemic egg envelope to yield gp41.. Functionally, mediates gamete interaction by affecting the vitelline coat. This Rhinella arenarum (Argentine common toad) protein is Ovochymase-2 (OVCH2).